The following is a 144-amino-acid chain: Superoxide dismutase [Mn], mitochondrial (144 aa).

Residues histidine 10, histidine 58, and aspartate 143 each coordinate Mn(2+).

This sequence belongs to the iron/manganese superoxide dismutase family. In terms of assembly, homotetramer. It depends on Mn(2+) as a cofactor.

It is found in the mitochondrion matrix. The enzyme catalyses 2 superoxide + 2 H(+) = H2O2 + O2. In terms of biological role, destroys superoxide anion radicals which are normally produced within the cells and which are toxic to biological systems. The polypeptide is Superoxide dismutase [Mn], mitochondrial (Eptatretus stoutii (Pacific hagfish)).